A 458-amino-acid polypeptide reads, in one-letter code: N-acetylgalactosamine kinase (458 aa).

Alpha-D-galactose is bound by residues R43, E49, H50, and D52. Residues G143, S145, and S146 each coordinate ATP. Residue D190 coordinates alpha-D-galactose. The Proton acceptor role is filled by D190. 2 residues coordinate ATP: N233 and K234.

Belongs to the GHMP kinase family. GalK subfamily. As to quaternary structure, monomer.

It catalyses the reaction N-acetyl-alpha-D-galactosamine + ATP = N-acetyl-alpha-D-galactosamine 1-phosphate + ADP + H(+). In terms of biological role, acts on GalNAc. Also acts as a galactokinase when galactose is present at high concentrations. This chain is N-acetylgalactosamine kinase (GALK2), found in Pongo abelii (Sumatran orangutan).